We begin with the raw amino-acid sequence, 314 residues long: Phosphoribosylaminoimidazole-succinocarboxamide synthase (314 aa).

It belongs to the SAICAR synthetase family.

The catalysed reaction is 5-amino-1-(5-phospho-D-ribosyl)imidazole-4-carboxylate + L-aspartate + ATP = (2S)-2-[5-amino-1-(5-phospho-beta-D-ribosyl)imidazole-4-carboxamido]succinate + ADP + phosphate + 2 H(+). It functions in the pathway purine metabolism; IMP biosynthesis via de novo pathway; 5-amino-1-(5-phospho-D-ribosyl)imidazole-4-carboxamide from 5-amino-1-(5-phospho-D-ribosyl)imidazole-4-carboxylate: step 1/2. The polypeptide is Phosphoribosylaminoimidazole-succinocarboxamide synthase (Bacteroides fragilis (strain ATCC 25285 / DSM 2151 / CCUG 4856 / JCM 11019 / LMG 10263 / NCTC 9343 / Onslow / VPI 2553 / EN-2)).